Consider the following 242-residue polypeptide: Type III pantothenate kinase (242 aa).

7 to 14 (DNSNTRTK) serves as a coordination point for ATP. Substrate contacts are provided by residues Tyr-88 and 95–98 (GADR). Asp-97 (proton acceptor) is an active-site residue. Asp-117 is a binding site for K(+). Thr-120 contributes to the ATP binding site. Position 172 (Thr-172) interacts with substrate.

This sequence belongs to the type III pantothenate kinase family. In terms of assembly, homodimer. NH4(+) is required as a cofactor. K(+) serves as cofactor.

Its subcellular location is the cytoplasm. The enzyme catalyses (R)-pantothenate + ATP = (R)-4'-phosphopantothenate + ADP + H(+). It participates in cofactor biosynthesis; coenzyme A biosynthesis; CoA from (R)-pantothenate: step 1/5. Its function is as follows. Catalyzes the phosphorylation of pantothenate (Pan), the first step in CoA biosynthesis. The polypeptide is Type III pantothenate kinase (Akkermansia muciniphila (strain ATCC BAA-835 / DSM 22959 / JCM 33894 / BCRC 81048 / CCUG 64013 / CIP 107961 / Muc)).